The following is a 354-amino-acid chain: MAQASNSRIKVGIVGGTGYTGVELLRLLSQHPHVALTAITSRKEDGLPVADMYPNLRGRVKLAFSAPEKASLTDCDVVFFATPHGVAMAQAAELLAAGTRVIDLAADFRLQDTAVFERWYKIPHTCPDILADSVYGLVELNREAISKARVIGNPGCYPTTVLLGLAPLIEGGKQLVDVQTLIADCKSGVSGAGRKAEVGSLFSEASDNFKAYGVAGHRHQPEIVAQLEKLAGGKVGLTFVPHLVPMIRGMFSTLYARILPQARDTDFQALFEARYADEPFVDVMPAGSLPETRSVRASNNLRISVQRPGGGDQLVILVVQDNLVKGASGQAVQNMNLMFGLPESAGLDQVAILP.

Cysteine 156 is a catalytic residue.

Belongs to the NAGSA dehydrogenase family. Type 1 subfamily.

Its subcellular location is the cytoplasm. The catalysed reaction is N-acetyl-L-glutamate 5-semialdehyde + phosphate + NADP(+) = N-acetyl-L-glutamyl 5-phosphate + NADPH + H(+). The protein operates within amino-acid biosynthesis; L-arginine biosynthesis; N(2)-acetyl-L-ornithine from L-glutamate: step 3/4. Functionally, catalyzes the NADPH-dependent reduction of N-acetyl-5-glutamyl phosphate to yield N-acetyl-L-glutamate 5-semialdehyde. This is N-acetyl-gamma-glutamyl-phosphate reductase from Bordetella bronchiseptica (strain ATCC BAA-588 / NCTC 13252 / RB50) (Alcaligenes bronchisepticus).